A 182-amino-acid polypeptide reads, in one-letter code: Ribosome-recycling factor (182 aa).

The protein belongs to the RRF family.

Its subcellular location is the cytoplasm. Functionally, responsible for the release of ribosomes from messenger RNA at the termination of protein biosynthesis. May increase the efficiency of translation by recycling ribosomes from one round of translation to another. The protein is Ribosome-recycling factor of Synechocystis sp. (strain ATCC 27184 / PCC 6803 / Kazusa).